The chain runs to 231 residues: DNA mismatch repair protein MutH (231 aa).

The protein belongs to the MutH family.

The protein resides in the cytoplasm. Functionally, sequence-specific endonuclease that cleaves unmethylated GATC sequences. It is involved in DNA mismatch repair. The sequence is that of DNA mismatch repair protein MutH from Shewanella woodyi (strain ATCC 51908 / MS32).